We begin with the raw amino-acid sequence, 253 residues long: MVSSFTSAPRSGFYYFAQGWKLVLQPGIRRFVILPLLVNILLMGGAFWWLFTQLDVWIPTLMSYVPDWLQWLSYLLWPLAVISVLLVFGYFFSTIANWIAAPFNGLLAEQLEARLTGATPPDTGIFGIMKDVPRIMKREWQKFAWYLPRAIVLLILYFIPGIGQTVAPVLWFLFSAWMLAIQYCDYPFDNHKVPFKEMRTALRTRKITNMQFGALTSLFTMIPLLNLFIMPVAVCGATAMWVDCYRDKHAMWR.

The next 4 helical transmembrane spans lie at 31–51 (FVIL…WWLF), 75–95 (LLWP…FSTI), 151–171 (IVLL…PVLW), and 222–242 (IPLL…AMWV).

The protein belongs to the CysZ family.

Its subcellular location is the cell inner membrane. High affinity, high specificity proton-dependent sulfate transporter, which mediates sulfate uptake. Provides the sulfur source for the cysteine synthesis pathway. The polypeptide is Sulfate transporter CysZ (Escherichia coli O81 (strain ED1a)).